The following is a 288-amino-acid chain: Acetyl-coenzyme A carboxylase carboxyl transferase subunit beta (288 aa).

Positions 32-288 constitute a CoA carboxyltransferase N-terminal domain; that stretch reads LFAKCPACKH…LELHTEVENV (257 aa). The Zn(2+) site is built by Cys36, Cys39, Cys54, and Cys57. The C4-type zinc finger occupies 36 to 57; the sequence is CPACKHTIYQKDLGKNKVCPNC.

This sequence belongs to the AccD/PCCB family. As to quaternary structure, acetyl-CoA carboxylase is a heterohexamer composed of biotin carboxyl carrier protein (AccB), biotin carboxylase (AccC) and two subunits each of ACCase subunit alpha (AccA) and ACCase subunit beta (AccD). Zn(2+) is required as a cofactor.

Its subcellular location is the cytoplasm. It carries out the reaction N(6)-carboxybiotinyl-L-lysyl-[protein] + acetyl-CoA = N(6)-biotinyl-L-lysyl-[protein] + malonyl-CoA. The protein operates within lipid metabolism; malonyl-CoA biosynthesis; malonyl-CoA from acetyl-CoA: step 1/1. Its function is as follows. Component of the acetyl coenzyme A carboxylase (ACC) complex. Biotin carboxylase (BC) catalyzes the carboxylation of biotin on its carrier protein (BCCP) and then the CO(2) group is transferred by the transcarboxylase to acetyl-CoA to form malonyl-CoA. In Lactococcus lactis subsp. cremoris (strain MG1363), this protein is Acetyl-coenzyme A carboxylase carboxyl transferase subunit beta.